The following is a 150-amino-acid chain: Histone H3-like centromeric protein A (150 aa).

The tract at residues 1-56 is disordered; it reads MRPGSTPASRRKSRPPRRVSPPLPTTSTRSPGRPSAPEQRKAPRATPKKRFRPGTR. Positions 25-37 are enriched in low complexity; that stretch reads TTSTRSPGRPSAP. Positions 42–53 are enriched in basic residues; that stretch reads APRATPKKRFRP. The interval 53 to 150 is H3-like; it reads PGTRALMEIR…RIRGVTEGLG (98 aa).

It belongs to the histone H3 family. Component of centromeric nucleosomes, where DNA is wrapped around a histone octamer core. The octamer contains two molecules each of H2A, H2B, CENPA and H4 assembled in one CENPA-H4 heterotetramer and two H2A-H2B heterodimers. CENPA modulates the DNA-binding characteristics of nucleosomes so that protruding DNA ends have higher flexibility than in nucleosomes containing conventional histone H3.

It localises to the nucleus. The protein resides in the chromosome. It is found in the centromere. Functionally, histone H3-like nucleosomal protein that is specifically found in centromeric nucleosomes. Replaces conventional H3 in the nucleosome core of centromeric chromatin that serves as an assembly site for the inner kinetochore. The presence of CENPA subtly modifies the nucleosome structure and the way DNA is wrapped around the nucleosome and gives rise to protruding DNA ends that are less well-ordered and rigid compared to nucleosomes containing histone H3. May serve as an epigenetic mark that propagates centromere identity through replication and cell division. Required for recruitment and assembly of kinetochore proteins, and as a consequence required for progress through mitosis, chromosome segregation and cytokinesis. This chain is Histone H3-like centromeric protein A (cenpa), found in Xenopus tropicalis (Western clawed frog).